Reading from the N-terminus, the 287-residue chain is Heterodimeric geranylgeranyl pyrophosphate synthase small subunit 2, chloroplastic (287 aa).

Mg(2+) contacts are provided by Glu103 and Asp109. Lys204, Gln241, and Lys250 together coordinate dimethylallyl diphosphate.

Belongs to the FPP/GGPP synthase family. As to quaternary structure, part of a heterodimeric geranyl(geranyl)diphosphate synthase. The cofactor is Mg(2+). As to expression, mainly expressed in trichomes, and, to a lower extent, in roots, leaves, flowers and stems.

It is found in the plastid. The protein localises to the chloroplast thylakoid membrane. Functionally, heterodimeric geranyl(geranyl)-diphosphate (GPP) synthase small subunit. The small subunit alone is inactive in vitro while the large subunit GGPPS1 catalyzes mainly the production of geranygeranyl-diphosphate in vitro. Upon association of the two subunits, the product profile changes and the production of gerany-diphosphate is strongly increased. This Cannabis sativa (Hemp) protein is Heterodimeric geranylgeranyl pyrophosphate synthase small subunit 2, chloroplastic.